A 249-amino-acid polypeptide reads, in one-letter code: Indole-3-glycerol phosphate synthase (249 aa).

This sequence belongs to the TrpC family.

The catalysed reaction is 1-(2-carboxyphenylamino)-1-deoxy-D-ribulose 5-phosphate + H(+) = (1S,2R)-1-C-(indol-3-yl)glycerol 3-phosphate + CO2 + H2O. The protein operates within amino-acid biosynthesis; L-tryptophan biosynthesis; L-tryptophan from chorismate: step 4/5. This is Indole-3-glycerol phosphate synthase from Pyrobaculum neutrophilum (strain DSM 2338 / JCM 9278 / NBRC 100436 / V24Sta) (Thermoproteus neutrophilus).